Here is a 289-residue protein sequence, read N- to C-terminus: Elongation factor Ts (289 aa).

The interval 80 to 83 (TDFV) is involved in Mg(2+) ion dislocation from EF-Tu.

It belongs to the EF-Ts family.

It is found in the cytoplasm. Functionally, associates with the EF-Tu.GDP complex and induces the exchange of GDP to GTP. It remains bound to the aminoacyl-tRNA.EF-Tu.GTP complex up to the GTP hydrolysis stage on the ribosome. This Francisella tularensis subsp. holarctica (strain LVS) protein is Elongation factor Ts.